A 500-amino-acid chain; its full sequence is L-arabinose isomerase (500 aa).

Glu-306, Glu-333, His-350, and His-450 together coordinate Mn(2+).

Belongs to the arabinose isomerase family. Homohexamer. Mn(2+) serves as cofactor.

It catalyses the reaction beta-L-arabinopyranose = L-ribulose. Its pathway is carbohydrate degradation; L-arabinose degradation via L-ribulose; D-xylulose 5-phosphate from L-arabinose (bacterial route): step 1/3. Catalyzes the conversion of L-arabinose to L-ribulose. This chain is L-arabinose isomerase, found in Klebsiella pneumoniae (strain 342).